Consider the following 111-residue polypeptide: U-scoloptoxin(16)-Er8a (111 aa).

The N-terminal stretch at 1–26 (MTSTRKLSVSCLIVFMVSSLIAVSSG) is a signal peptide.

It belongs to the scoloptoxin-16 family. Post-translationally, contains 4 disulfide bonds. As to expression, expressed by the venom gland.

It is found in the secreted. The protein is U-scoloptoxin(16)-Er8a of Ethmostigmus rubripes (Giant centipede).